A 492-amino-acid polypeptide reads, in one-letter code: Protein nucleotidyltransferase YdiU (492 aa).

ATP-binding residues include G101, G103, R104, K124, D136, G137, R187, and R194. D268 acts as the Proton acceptor in catalysis. Residues N269 and D278 each coordinate Mg(2+). D278 is a binding site for ATP.

It belongs to the SELO family. Mg(2+) serves as cofactor. Requires Mn(2+) as cofactor.

It carries out the reaction L-seryl-[protein] + ATP = 3-O-(5'-adenylyl)-L-seryl-[protein] + diphosphate. The catalysed reaction is L-threonyl-[protein] + ATP = 3-O-(5'-adenylyl)-L-threonyl-[protein] + diphosphate. It catalyses the reaction L-tyrosyl-[protein] + ATP = O-(5'-adenylyl)-L-tyrosyl-[protein] + diphosphate. The enzyme catalyses L-histidyl-[protein] + UTP = N(tele)-(5'-uridylyl)-L-histidyl-[protein] + diphosphate. It carries out the reaction L-seryl-[protein] + UTP = O-(5'-uridylyl)-L-seryl-[protein] + diphosphate. The catalysed reaction is L-tyrosyl-[protein] + UTP = O-(5'-uridylyl)-L-tyrosyl-[protein] + diphosphate. Nucleotidyltransferase involved in the post-translational modification of proteins. It can catalyze the addition of adenosine monophosphate (AMP) or uridine monophosphate (UMP) to a protein, resulting in modifications known as AMPylation and UMPylation. This is Protein nucleotidyltransferase YdiU from Corynebacterium efficiens (strain DSM 44549 / YS-314 / AJ 12310 / JCM 11189 / NBRC 100395).